The following is a 364-amino-acid chain: tRNA/tmRNA (uracil-C(5))-methyltransferase (364 aa).

Positions 188, 216, 221, 237, and 297 each coordinate S-adenosyl-L-methionine. The active-site Nucleophile is Cys-322. Residue Glu-356 is the Proton acceptor of the active site.

The protein belongs to the class I-like SAM-binding methyltransferase superfamily. RNA M5U methyltransferase family. TrmA subfamily.

It catalyses the reaction uridine(54) in tRNA + S-adenosyl-L-methionine = 5-methyluridine(54) in tRNA + S-adenosyl-L-homocysteine + H(+). The catalysed reaction is uridine(341) in tmRNA + S-adenosyl-L-methionine = 5-methyluridine(341) in tmRNA + S-adenosyl-L-homocysteine + H(+). In terms of biological role, dual-specificity methyltransferase that catalyzes the formation of 5-methyluridine at position 54 (m5U54) in all tRNAs, and that of position 341 (m5U341) in tmRNA (transfer-mRNA). The protein is tRNA/tmRNA (uracil-C(5))-methyltransferase of Mannheimia succiniciproducens (strain KCTC 0769BP / MBEL55E).